Consider the following 173-residue polypeptide: Flavodoxin 2 (173 aa).

Residues 3-165 enclose the Flavodoxin-like domain; it reads MGLFYGSSTC…RIQTWCEQIL (163 aa).

Belongs to the flavodoxin family. FMN serves as cofactor.

In terms of biological role, low-potential electron donor to a number of redox enzymes. The polypeptide is Flavodoxin 2 (fldB) (Salmonella typhi).